The sequence spans 445 residues: Probable multidrug resistance protein YpnP (445 aa).

Helical transmembrane passes span 15 to 35 (LVLFSMPIMLGNALQVSFQFI), 49 to 69 (LGAAAVSSTIVLTVLSFILGL), 95 to 115 (AFVVLLTGLSIGFGAAGFFLS), 136 to 156 (LQIQFIGILFLFGYNFISTVL), 168 to 188 (FIAFAVVLNTVLAPLFISVFR), 194 to 214 (AAYSTILSQGIAFLYGLFYVI), 240 to 260 (IPAGLQMMVITGGMMAIMSVV), 277 to 297 (LDSIITLPAMAAGTAVNSMAG), 314 to 334 (LGVIAVISCMLVIAVMIWVFG), 355 to 375 (LKWIAFFYPFIGVNFVLNGIV), 384 to 404 (VLVLNLISFWVLRYPFTALFS), and 411 to 431 (GIGLGIGMSFLFSSCAAFLYY).

This sequence belongs to the multi antimicrobial extrusion (MATE) (TC 2.A.66.1) family.

The protein localises to the cell membrane. The protein is Probable multidrug resistance protein YpnP (ypnP) of Bacillus subtilis (strain 168).